The following is a 428-amino-acid chain: Glutamine synthetase, chloroplastic (428 aa).

The N-terminal 49 residues, 1–49, are a transit peptide targeting the chloroplast; it reads MAQILAASPTCQMRLTKPSSIASSKLWNSVVLKQKKQSSSKVRSFKVMA. The GS beta-grasp domain occupies 75–155; the sequence is IIAEYIWIGG…VICDTYTPAG (81 aa). The tract at residues 94–120 is disordered; sequence RTLEKPVEDPSELPKWNYDGSSTGQAP. Residue Ser104 is modified to Phosphoserine. One can recognise a GS catalytic domain in the interval 159–428; sequence PTNKRARAAE…LAAQKLSLKV (270 aa).

Belongs to the glutamine synthetase family. In terms of assembly, homooctamer.

The protein localises to the plastid. Its subcellular location is the chloroplast. The catalysed reaction is L-glutamate + NH4(+) + ATP = L-glutamine + ADP + phosphate + H(+). The light-modulated chloroplast enzyme, encoded by a nuclear gene and expressed primarily in leaves, is responsible for the reassimilation of the ammonia generated by photorespiration. The polypeptide is Glutamine synthetase, chloroplastic (GLN2) (Brassica napus (Rape)).